The following is a 158-amino-acid chain: Aspartate carbamoyltransferase regulatory chain (158 aa).

4 residues coordinate Zn(2+): cysteine 111, cysteine 116, cysteine 140, and cysteine 143.

This sequence belongs to the PyrI family. In terms of assembly, contains catalytic and regulatory chains. It depends on Zn(2+) as a cofactor.

In terms of biological role, involved in allosteric regulation of aspartate carbamoyltransferase. The chain is Aspartate carbamoyltransferase regulatory chain from Metallosphaera sedula (strain ATCC 51363 / DSM 5348 / JCM 9185 / NBRC 15509 / TH2).